The following is a 612-amino-acid chain: Dihydroxy-acid dehydratase (612 aa).

Asp81 contributes to the Mg(2+) binding site. Position 122 (Cys122) interacts with [2Fe-2S] cluster. Residues Asp123 and Lys124 each contribute to the Mg(2+) site. Lys124 carries the N6-carboxylysine modification. Cys193 provides a ligand contact to [2Fe-2S] cluster. Glu489 contributes to the Mg(2+) binding site. Ser515 functions as the Proton acceptor in the catalytic mechanism.

It belongs to the IlvD/Edd family. As to quaternary structure, homodimer. The cofactor is [2Fe-2S] cluster. Mg(2+) serves as cofactor.

The enzyme catalyses (2R)-2,3-dihydroxy-3-methylbutanoate = 3-methyl-2-oxobutanoate + H2O. It carries out the reaction (2R,3R)-2,3-dihydroxy-3-methylpentanoate = (S)-3-methyl-2-oxopentanoate + H2O. The protein operates within amino-acid biosynthesis; L-isoleucine biosynthesis; L-isoleucine from 2-oxobutanoate: step 3/4. It functions in the pathway amino-acid biosynthesis; L-valine biosynthesis; L-valine from pyruvate: step 3/4. Functionally, functions in the biosynthesis of branched-chain amino acids. Catalyzes the dehydration of (2R,3R)-2,3-dihydroxy-3-methylpentanoate (2,3-dihydroxy-3-methylvalerate) into 2-oxo-3-methylpentanoate (2-oxo-3-methylvalerate) and of (2R)-2,3-dihydroxy-3-methylbutanoate (2,3-dihydroxyisovalerate) into 2-oxo-3-methylbutanoate (2-oxoisovalerate), the penultimate precursor to L-isoleucine and L-valine, respectively. This chain is Dihydroxy-acid dehydratase, found in Stenotrophomonas maltophilia (strain R551-3).